Consider the following 412-residue polypeptide: Isocitrate dehydrogenase [NADP] cytoplasmic (412 aa).

Residues 76–78 and Arg83 contribute to the NADP(+) site; that span reads TIT. Residue Thr78 participates in substrate binding. Residues 95–101, Arg110, and Arg133 contribute to the substrate site; that span reads SPNGTIR. Asp253 serves as a coordination point for Mn(2+). Lys261 contributes to the NADP(+) binding site. Asp276 contacts Mn(2+). NADP(+) contacts are provided by residues 309–314 and Asn327; that span reads GTVTRH.

Belongs to the isocitrate and isopropylmalate dehydrogenases family. As to quaternary structure, homodimer. The cofactor is Mg(2+). Mn(2+) serves as cofactor.

The protein resides in the cytoplasm. The catalysed reaction is D-threo-isocitrate + NADP(+) = 2-oxoglutarate + CO2 + NADPH. The protein is Isocitrate dehydrogenase [NADP] cytoplasmic (idhC) of Dictyostelium discoideum (Social amoeba).